Consider the following 261-residue polypeptide: Small ribosomal subunit protein uS2 (261 aa).

The segment at 222–261 (GKALREQDGEANEEQPISEEEKKEVLEEAMSEEDFEGDKE) is disordered. 2 stretches are compositionally biased toward acidic residues: residues 230-239 (GEANEEQPIS) and 248-261 (EEAM…GDKE).

It belongs to the universal ribosomal protein uS2 family.

This Campylobacter lari (strain RM2100 / D67 / ATCC BAA-1060) protein is Small ribosomal subunit protein uS2.